The sequence spans 1342 residues: DNA-directed RNA polymerase subunit beta (1342 aa).

It belongs to the RNA polymerase beta chain family. The RNAP catalytic core consists of 2 alpha, 1 beta, 1 beta' and 1 omega subunit. When a sigma factor is associated with the core the holoenzyme is formed, which can initiate transcription.

The enzyme catalyses RNA(n) + a ribonucleoside 5'-triphosphate = RNA(n+1) + diphosphate. Functionally, DNA-dependent RNA polymerase catalyzes the transcription of DNA into RNA using the four ribonucleoside triphosphates as substrates. This is DNA-directed RNA polymerase subunit beta from Salmonella typhimurium (strain LT2 / SGSC1412 / ATCC 700720).